A 304-amino-acid polypeptide reads, in one-letter code: Capsid protein (304 aa).

Composition is skewed to basic and acidic residues over residues 1 to 24 and 32 to 54; these read MGDS…REAR and FEGK…EMSL. The tract at residues 1-54 is disordered; the sequence is MGDSTKKAETAKDEGTSQERREARPLPTAADFEGKDTSENTDGRAADADGEMSL.

Belongs to the potexviruses coat protein family.

It localises to the virion. Required for genome encapsidation. Forms ribonucleoprotein complexes along with TGB1 helicase and viral RNA. This chain is Capsid protein, found in Potato virus M (strain Russian) (PVM).